The primary structure comprises 102 residues: Small ribosomal subunit protein uS10 (102 aa).

Belongs to the universal ribosomal protein uS10 family. Part of the 30S ribosomal subunit.

Functionally, involved in the binding of tRNA to the ribosomes. This Chlorobium phaeobacteroides (strain BS1) protein is Small ribosomal subunit protein uS10.